A 247-amino-acid polypeptide reads, in one-letter code: DNA-directed RNA polymerase subunit Rpo3 (247 aa).

The protein belongs to the archaeal Rpo3/eukaryotic RPB3 RNA polymerase subunit family. As to quaternary structure, part of the RNA polymerase complex.

It localises to the cytoplasm. The enzyme catalyses RNA(n) + a ribonucleoside 5'-triphosphate = RNA(n+1) + diphosphate. Its function is as follows. DNA-dependent RNA polymerase (RNAP) catalyzes the transcription of DNA into RNA using the four ribonucleoside triphosphates as substrates. This Natronomonas pharaonis (strain ATCC 35678 / DSM 2160 / CIP 103997 / JCM 8858 / NBRC 14720 / NCIMB 2260 / Gabara) (Halobacterium pharaonis) protein is DNA-directed RNA polymerase subunit Rpo3.